The primary structure comprises 291 residues: Proline iminopeptidase (291 aa).

One can recognise an AB hydrolase-1 domain in the interval L30–D274. S103 acts as the Nucleophile in catalysis. D242 is an active-site residue. The active-site Proton donor is the H269.

The protein belongs to the peptidase S33 family.

It localises to the cell envelope. It carries out the reaction Release of N-terminal proline from a peptide.. Its function is as follows. Releases the N-terminal proline from various substrates. The protein is Proline iminopeptidase of Lacticaseibacillus rhamnosus (strain Lc 705) (Lactobacillus rhamnosus).